We begin with the raw amino-acid sequence, 98 residues long: NADH-ubiquinone oxidoreductase chain 4L (98 aa).

Transmembrane regions (helical) follow at residues 1–21, 27–47, and 61–81; these read MTLT…GMLT, VASL…ATLI, and IILL…LISI.

This sequence belongs to the complex I subunit 4L family. Core subunit of respiratory chain NADH dehydrogenase (Complex I) which is composed of 45 different subunits.

Its subcellular location is the mitochondrion inner membrane. The catalysed reaction is a ubiquinone + NADH + 5 H(+)(in) = a ubiquinol + NAD(+) + 4 H(+)(out). Its function is as follows. Core subunit of the mitochondrial membrane respiratory chain NADH dehydrogenase (Complex I) which catalyzes electron transfer from NADH through the respiratory chain, using ubiquinone as an electron acceptor. Part of the enzyme membrane arm which is embedded in the lipid bilayer and involved in proton translocation. The sequence is that of NADH-ubiquinone oxidoreductase chain 4L (MT-ND4L) from Macaca mulatta (Rhesus macaque).